Reading from the N-terminus, the 300-residue chain is N-acetylmuramic acid 6-phosphate etherase (300 aa).

Positions 57–220 constitute an SIS domain; it reads VAAALRAGGR…STGAMIRIGK (164 aa). Catalysis depends on Glu-85, which acts as the Proton donor. Residue Glu-116 is part of the active site.

It belongs to the GCKR-like family. MurNAc-6-P etherase subfamily. Homodimer.

It catalyses the reaction N-acetyl-D-muramate 6-phosphate + H2O = N-acetyl-D-glucosamine 6-phosphate + (R)-lactate. It functions in the pathway amino-sugar metabolism; 1,6-anhydro-N-acetylmuramate degradation. It participates in amino-sugar metabolism; N-acetylmuramate degradation. The protein operates within cell wall biogenesis; peptidoglycan recycling. In terms of biological role, specifically catalyzes the cleavage of the D-lactyl ether substituent of MurNAc 6-phosphate, producing GlcNAc 6-phosphate and D-lactate. Together with AnmK, is also required for the utilization of anhydro-N-acetylmuramic acid (anhMurNAc) either imported from the medium or derived from its own cell wall murein, and thus plays a role in cell wall recycling. This is N-acetylmuramic acid 6-phosphate etherase from Klebsiella aerogenes (Enterobacter aerogenes).